The following is a 151-amino-acid chain: Coiled-coil-helix-coiled-coil-helix domain-containing protein 2 (151 aa).

2 disordered regions span residues 1–50 (MPRG…AAAP) and 77–111 (GHAI…AQQQ). Over residues 10-26 (SRMAPPASRAPQMRAAP) the composition is skewed to low complexity. The segment covering 27–38 (RPAPVAQPPAAA) has biased composition (pro residues). Composition is skewed to low complexity over residues 39–50 (PPSAVGSSAAAP) and 100–111 (QEPQGTQPAQQQ). The CHCH domain maps to 111-151 (QQPCLYEIKQFLECAQNQGDIKLCEGFNEVLKQCRLANGLA). 2 consecutive short sequence motifs (cx9C motif) follow at residues 114–124 (CLYEIKQFLEC) and 134–144 (CEGFNEVLKQC). 2 disulfide bridges follow: Cys114–Cys144 and Cys124–Cys134.

In terms of assembly, interacts with RBPJ.

The protein resides in the nucleus. The protein localises to the mitochondrion. It localises to the mitochondrion intermembrane space. Its function is as follows. Transcription factor. Binds to the oxygen responsive element of COX4I2 and activates its transcription under hypoxia conditions (4% oxygen), as well as normoxia conditions (20% oxygen). The polypeptide is Coiled-coil-helix-coiled-coil-helix domain-containing protein 2 (CHCHD2) (Homo sapiens (Human)).